Here is a 591-residue protein sequence, read N- to C-terminus: MGAARIAPSLALLLCCPVLSSAYALVDADDVFTKEEQIFLLHRAQAQCDKLLKEVLHTAANIMESDKGWTPASTSGKPRKEKASGKFYPESKENKDVPTGSRRRGRPCLPEWDNIVCWPLGAPGEVVAVPCPDYIYDFNHKGHAYRRCDRNGSWEVVPGHNRTWANYSECLKFMTNETREREVFDRLGMIYTVGYSMSLASLTVAVLILAYFRRLHCTRNYIHMHMFLSFMLRAASIFVKDAVLYSGFTLDEAERLTEEELHIIAQVPPPPAAAAVGYAGCRVAVTFFLYFLATNYYWILVEGLYLHSLIFMAFFSEKKYLWGFTIFGWGLPAVFVAVWVGVRATLANTGCWDLSSGHKKWIIQVPILASVVLNFILFINIIRVLATKLRETNAGRCDTRQQYRKLLRSTLVLVPLFGVHYTVFMALPYTEVSGTLWQIQMHYEMLFNSFQGFFVAIIYCFCNGEVQAEIRKSWSRWTLALDFKRKARSGSSSYSYGPMVSHTSVTNVGPRAGLSLPLSPRLPPATTNGHSQLPGHAKPGAPATETETLPVTMAVPKDDGFLNGSCSGLDEEASGSARPPPLLQEEWETVM.

The signal sequence occupies residues 1–26; that stretch reads MGAARIAPSLALLLCCPVLSSAYALV. The Extracellular segment spans residues 27–188; that stretch reads DADDVFTKEE…REREVFDRLG (162 aa). 3 disulfide bridges follow: cysteine 48-cysteine 117, cysteine 108-cysteine 148, and cysteine 131-cysteine 170. Residues 67–104 form a disordered region; that stretch reads KGWTPASTSGKPRKEKASGKFYPESKENKDVPTGSRRR. Positions 81-96 are enriched in basic and acidic residues; it reads EKASGKFYPESKENKD. N-linked (GlcNAc...) asparagine glycosylation is found at asparagine 151, asparagine 161, asparagine 166, and asparagine 176. A helical transmembrane segment spans residues 189-212; sequence MIYTVGYSMSLASLTVAVLILAYF. At 213-219 the chain is on the cytoplasmic side; sequence RRLHCTR. The chain crosses the membrane as a helical span at residues 220-239; the sequence is NYIHMHMFLSFMLRAASIFV. At 240–282 the chain is on the extracellular side; the sequence is KDAVLYSGFTLDEAERLTEEELHIIAQVPPPPAAAAVGYAGCR. A helical transmembrane segment spans residues 283–306; it reads VAVTFFLYFLATNYYWILVEGLYL. At 307-320 the chain is on the cytoplasmic side; sequence HSLIFMAFFSEKKY. A helical membrane pass occupies residues 321-342; the sequence is LWGFTIFGWGLPAVFVAVWVGV. Topologically, residues 343-361 are extracellular; it reads RATLANTGCWDLSSGHKKW. Residues 362-382 form a helical membrane-spanning segment; the sequence is IIQVPILASVVLNFILFINII. The Cytoplasmic segment spans residues 383 to 409; sequence RVLATKLRETNAGRCDTRQQYRKLLRS. A helical transmembrane segment spans residues 410–428; the sequence is TLVLVPLFGVHYTVFMALP. Topologically, residues 429-440 are extracellular; it reads YTEVSGTLWQIQ. Residues 441 to 463 form a helical membrane-spanning segment; sequence MHYEMLFNSFQGFFVAIIYCFCN. Residues 464 to 591 lie on the Cytoplasmic side of the membrane; that stretch reads GEVQAEIRKS…LLQEEWETVM (128 aa). The short motif at 474 to 477 is the Important for interaction with G proteins element; it reads WSRW. The interval 516 to 544 is disordered; it reads LPLSPRLPPATTNGHSQLPGHAKPGAPAT.

It belongs to the G-protein coupled receptor 2 family. As to quaternary structure, homodimer in the absence of bound ligand. Peptide hormone binding leads to dissociation of the homodimer. In terms of processing, N-glycosylated.

It localises to the cell membrane. Functionally, G-protein-coupled receptor for parathyroid hormone (PTH) and for parathyroid hormone-related peptide (PTHLH). Ligand binding causes a conformation change that triggers signaling via guanine nucleotide-binding proteins (G proteins) and modulates the activity of downstream effectors, such as adenylate cyclase (cAMP). PTH1R is coupled to G(s) G alpha proteins and mediates activation of adenylate cyclase activity. PTHLH dissociates from PTH1R more rapidly than PTH; as consequence, the cAMP response induced by PTHLH decays faster than the response induced by PTH. This Rattus norvegicus (Rat) protein is Parathyroid hormone/parathyroid hormone-related peptide receptor (Pth1r).